Consider the following 467-residue polypeptide: MSSLPTVLVIGAGLAGSEAAWQIAQAGVPVRLIEMRPIKQSPAHYSSEFAELVCSNSFGALSSDRAAGLLKEELRRLGSIVIRTADSHAVPAGGALAVNRASFSASLTKELSAHPLITIERHEQEHLPGEGQITVLATGPLTSELLAENLRTFTGRSECHFFDAASPIIEGESIDLTLAFRASRYDKGDADYMNCPMDKGQYLAFREALLNAEQAELKEFDKESAKFFEGCLPIEELARRGEDTMRYGPLKPIGLWDPRWGDLNDRDVRRSKRAYAVVQLRKEDHEGRLWNLVGFQTNLKWSEQKRVLKMIPGLHQAEFVRFGVMHRNTFLEAPQLLEPTLQFSKRSNLLAAGQITGTEGYTAAVAGGWLAGSNAARLAMGLNTITLPSTTMIGALTHFVSDSDCFRDRKGEFQPMPANFGLLPELAERIHAKRERYGAYRDRALTMLEEAQQQWGMSKAPVQIGSS.

11 to 16 serves as a coordination point for FAD; the sequence is GAGLAG.

Belongs to the MnmG family. TrmFO subfamily. It depends on FAD as a cofactor.

The protein resides in the cytoplasm. It carries out the reaction uridine(54) in tRNA + (6R)-5,10-methylene-5,6,7,8-tetrahydrofolate + NADH + H(+) = 5-methyluridine(54) in tRNA + (6S)-5,6,7,8-tetrahydrofolate + NAD(+). The catalysed reaction is uridine(54) in tRNA + (6R)-5,10-methylene-5,6,7,8-tetrahydrofolate + NADPH + H(+) = 5-methyluridine(54) in tRNA + (6S)-5,6,7,8-tetrahydrofolate + NADP(+). Catalyzes the folate-dependent formation of 5-methyl-uridine at position 54 (M-5-U54) in all tRNAs. This is Methylenetetrahydrofolate--tRNA-(uracil-5-)-methyltransferase TrmFO from Prochlorococcus marinus (strain MIT 9303).